A 318-amino-acid polypeptide reads, in one-letter code: Transaldolase (318 aa).

Lysine 132 serves as the catalytic Schiff-base intermediate with substrate.

Belongs to the transaldolase family. Type 1 subfamily. Homodimer.

It localises to the cytoplasm. It carries out the reaction D-sedoheptulose 7-phosphate + D-glyceraldehyde 3-phosphate = D-erythrose 4-phosphate + beta-D-fructose 6-phosphate. It participates in carbohydrate degradation; pentose phosphate pathway; D-glyceraldehyde 3-phosphate and beta-D-fructose 6-phosphate from D-ribose 5-phosphate and D-xylulose 5-phosphate (non-oxidative stage): step 2/3. In terms of biological role, transaldolase is important for the balance of metabolites in the pentose-phosphate pathway. This is Transaldolase from Shewanella putrefaciens (strain CN-32 / ATCC BAA-453).